Consider the following 341-residue polypeptide: DNA-directed RNA polymerase subunit alpha (341 aa).

Positions 1–233 (MLKDGTSVSN…DLLSPFLHTK (233 aa)) are alpha N-terminal domain (alpha-NTD). The tract at residues 262–341 (SEGDFFKNTF…NEKPRVVGDE (80 aa)) is alpha C-terminal domain (alpha-CTD).

Belongs to the RNA polymerase alpha chain family. In plastids the minimal PEP RNA polymerase catalytic core is composed of four subunits: alpha, beta, beta', and beta''. When a (nuclear-encoded) sigma factor is associated with the core the holoenzyme is formed, which can initiate transcription.

Its subcellular location is the plastid. The protein localises to the chloroplast. The enzyme catalyses RNA(n) + a ribonucleoside 5'-triphosphate = RNA(n+1) + diphosphate. DNA-dependent RNA polymerase catalyzes the transcription of DNA into RNA using the four ribonucleoside triphosphates as substrates. The sequence is that of DNA-directed RNA polymerase subunit alpha from Marsilea quadrifolia (European water clover).